We begin with the raw amino-acid sequence, 221 residues long: Deoxyribose-phosphate aldolase (221 aa).

Aspartate 89 functions as the Proton donor/acceptor in the catalytic mechanism. Lysine 151 acts as the Schiff-base intermediate with acetaldehyde in catalysis. Lysine 180 serves as the catalytic Proton donor/acceptor.

It belongs to the DeoC/FbaB aldolase family. DeoC type 1 subfamily.

Its subcellular location is the cytoplasm. The catalysed reaction is 2-deoxy-D-ribose 5-phosphate = D-glyceraldehyde 3-phosphate + acetaldehyde. It participates in carbohydrate degradation; 2-deoxy-D-ribose 1-phosphate degradation; D-glyceraldehyde 3-phosphate and acetaldehyde from 2-deoxy-alpha-D-ribose 1-phosphate: step 2/2. Catalyzes a reversible aldol reaction between acetaldehyde and D-glyceraldehyde 3-phosphate to generate 2-deoxy-D-ribose 5-phosphate. This chain is Deoxyribose-phosphate aldolase, found in Mesomycoplasma hyopneumoniae (strain J / ATCC 25934 / NCTC 10110) (Mycoplasma hyopneumoniae).